The chain runs to 84 residues: Extender of the chronological lifespan protein 2 (84 aa).

Belongs to the ecl1 family.

The protein localises to the nucleus. In terms of biological role, involved in chronological cell aging. The polypeptide is Extender of the chronological lifespan protein 2 (ecl2) (Schizosaccharomyces pombe (strain 972 / ATCC 24843) (Fission yeast)).